Consider the following 273-residue polypeptide: MSQTREDSVYLAKLAEQAERYEEMVENMKAVASSGQELSVEERNLLSVAYKNVIGARRASWRIVSSIEQKEESKEKSEHQVELIRSYRSKIETELTKISDDILSVLDSHLIPSATTGESKVFYYKMKGDYHRYLAEFSSGDAREKATNSSLEAYKTASEIATTELPPTHPIRLGLALNFSVFYYEIQNSPDKACHLAKQAFDDAIAELDTLSEESYKDSTLIMQLLRDNLTLWTSDISESGQEDQQQQQQQQQQQQQQQQQAPAEQTQGEPTK.

Serine 2 is subject to N-acetylserine. The segment at 236 to 273 is disordered; that stretch reads DISESGQEDQQQQQQQQQQQQQQQQQAPAEQTQGEPTK. Residues 245 to 261 are compositionally biased toward low complexity; it reads QQQQQQQQQQQQQQQQQ. The span at 262 to 273 shows a compositional bias: polar residues; the sequence is APAEQTQGEPTK.

It belongs to the 14-3-3 family. In terms of assembly, interacts with NTH1 (via N-terminus when phosphorylated by PKA); the interaction is direct and activates NTH1. Interacts with FIN1.

The protein localises to the cytoplasm. The protein resides in the nucleus. This chain is Protein BMH2 (BMH2), found in Saccharomyces cerevisiae (strain ATCC 204508 / S288c) (Baker's yeast).